We begin with the raw amino-acid sequence, 1054 residues long: Cell wall acid trehalase ARB_03719 (1054 aa).

The signal sequence occupies residues 1–24 (MKQPNINLAACILWLLSIITAVAA). Asn138, Asn178, Asn183, Asn207, Asn239, Asn277, and Asn309 each carry an N-linked (GlcNAc...) asparagine glycan. 450 to 451 (WD) lines the substrate pocket. Asn495, Asn515, Asn572, and Asn580 each carry an N-linked (GlcNAc...) asparagine glycan. Glu586 functions as the Proton donor in the catalytic mechanism. N-linked (GlcNAc...) asparagine glycosylation is found at Asn620 and Asn648. 654–655 (KQ) serves as a coordination point for substrate. N-linked (GlcNAc...) asparagine glycosylation is found at Asn808 and Asn844. The tract at residues 950-974 (PLHPVTDPENGDASGSSPTTPASSV) is disordered. The span at 962 to 974 (ASGSSPTTPASSV) shows a compositional bias: low complexity. 3 N-linked (GlcNAc...) asparagine glycosylation sites follow: Asn1004, Asn1007, and Asn1039.

The protein belongs to the glycosyl hydrolase 65 family.

The protein resides in the secreted. The protein localises to the cell wall. The enzyme catalyses alpha,alpha-trehalose + H2O = alpha-D-glucose + beta-D-glucose. In terms of biological role, cell wall acid trehalase that catalyzes hydrolysis of the disaccharide trehalose and required for growth on trehalose as carbon source. Plays a role in virulence. In Arthroderma benhamiae (strain ATCC MYA-4681 / CBS 112371) (Trichophyton mentagrophytes), this protein is Cell wall acid trehalase ARB_03719.